The following is a 209-amino-acid chain: Ion-translocating oxidoreductase complex subunit G (209 aa).

A helical transmembrane segment spans residues 9–29; sequence GITLALFAAGATGLTAVVNSL. Thr-175 is modified (FMN phosphoryl threonine).

This sequence belongs to the RnfG family. In terms of assembly, the complex is composed of six subunits: RnfA, RnfB, RnfC, RnfD, RnfE and RnfG. FMN serves as cofactor.

The protein localises to the cell inner membrane. Its function is as follows. Part of a membrane-bound complex that couples electron transfer with translocation of ions across the membrane. The chain is Ion-translocating oxidoreductase complex subunit G from Yersinia pestis.